Consider the following 400-residue polypeptide: Glutamyl-tRNA reductase (400 aa).

Residues 45–48 (TCNR), Ser103, 108–110 (EDQ), and Gln114 contribute to the substrate site. Cys46 serves as the catalytic Nucleophile. 179 to 184 (GYGEIG) contributes to the NADP(+) binding site.

It belongs to the glutamyl-tRNA reductase family. As to quaternary structure, homodimer.

The enzyme catalyses (S)-4-amino-5-oxopentanoate + tRNA(Glu) + NADP(+) = L-glutamyl-tRNA(Glu) + NADPH + H(+). The protein operates within porphyrin-containing compound metabolism; protoporphyrin-IX biosynthesis; 5-aminolevulinate from L-glutamyl-tRNA(Glu): step 1/2. Its function is as follows. Catalyzes the NADPH-dependent reduction of glutamyl-tRNA(Glu) to glutamate 1-semialdehyde (GSA). The sequence is that of Glutamyl-tRNA reductase from Clostridium perfringens (strain 13 / Type A).